Reading from the N-terminus, the 491-residue chain is MTDLTSLTLAEARDGLARKSFTALELTDAHLAAMERARVLNAYVLETPERAREMARQADGRIAKSEGGPLNGLPLGVKDLFATEGTRTTACSRILGDFKPPYESTVTSQLWRDGAVMLGKLNNDEFAMGSSNETSCFGPVINPWRRQGSDVRLVPGGSSGGSASAVAAGICLGATATDTGGSIRQPAAFTGTVGLKPTYGRCSRWGTVAFASSLDQAGPIARTVRDAAILLRSMAGHDPKDTTSVDRAVPDYEAAVGRSVKGMKIGLPREYRLDGMPAEIEKLWSQGADWLKAAGAELVEVSLPHTKYALPAYYIVAPAEASSNLARYDGVRYGARADGSNIVEMYENTRAKGFGAEVRRRIMIGTYVLSAGYYDAYYLRAQKVRTLIKKDFEDCYEAGVDAILTPATPSAAFGIGEKTDSDPIEMYLNDIFTVTANMAGLPGIAVPAGRDAQGLPLGLQLIGRPFDEEAVISLGEVIEQAAGRFTPEVWW.

Catalysis depends on charge relay system residues Lys78 and Ser158. Catalysis depends on Ser182, which acts as the Acyl-ester intermediate.

It belongs to the amidase family. GatA subfamily. In terms of assembly, heterotrimer of A, B and C subunits.

The catalysed reaction is L-glutamyl-tRNA(Gln) + L-glutamine + ATP + H2O = L-glutaminyl-tRNA(Gln) + L-glutamate + ADP + phosphate + H(+). Its function is as follows. Allows the formation of correctly charged Gln-tRNA(Gln) through the transamidation of misacylated Glu-tRNA(Gln) in organisms which lack glutaminyl-tRNA synthetase. The reaction takes place in the presence of glutamine and ATP through an activated gamma-phospho-Glu-tRNA(Gln). In Nitrobacter winogradskyi (strain ATCC 25391 / DSM 10237 / CIP 104748 / NCIMB 11846 / Nb-255), this protein is Glutamyl-tRNA(Gln) amidotransferase subunit A.